Here is a 747-residue protein sequence, read N- to C-terminus: Myotubularin-related protein 12 (747 aa).

The Myotubularin phosphatase domain occupies 205–643 (FDTLKDWCWE…PEIKVWAQRY (439 aa)). The interval 449–558 (VPVFLLFLDC…KGQRKGMRFK (110 aa)) is interaction with MTM1. Residues Ser-564, Ser-601, and Ser-716 each carry the phosphoserine modification.

The protein belongs to the protein-tyrosine phosphatase family. Non-receptor class myotubularin subfamily. Heterodimer with lipid phosphatase MTM1. Heterodimer with lipid phosphatase MTMR2. As to expression, expressed in skeletal muscles (at protein level). Ubiquitous with prominent expression in brain, heart, kidney, placenta, and lung.

The protein localises to the cytoplasm. It localises to the sarcoplasmic reticulum. It is found in the myofibril. Its subcellular location is the sarcomere. In terms of biological role, acts as an adapter for the myotubularin-related phosphatases. Regulates phosphatase MTM1 protein stability and possibly its intracellular location. By stabilizing MTM1 protein levels, required for skeletal muscle maintenance but not for myogenesis. This Homo sapiens (Human) protein is Myotubularin-related protein 12 (MTMR12).